We begin with the raw amino-acid sequence, 308 residues long: Glycine betaine uptake system ATP-binding protein YehX (308 aa).

The ABC transporter domain occupies 2-235 (IEFSHVSKLF…PANDFVRQFF (234 aa)). 34 to 41 (GTSGSGKS) contacts ATP.

This sequence belongs to the ABC transporter superfamily. In terms of assembly, the complex is composed of two ATP-binding proteins (YehX), two transmembrane proteins (YehW and YehY) and a solute-binding protein (YehZ).

The catalysed reaction is glycine betaine(out) + ATP + H2O = glycine betaine(in) + ADP + phosphate + H(+). Functionally, part of an ABC transporter complex involved in low-affinity glycine betaine uptake. Probably responsible for energy coupling to the transport system. The polypeptide is Glycine betaine uptake system ATP-binding protein YehX (yehX) (Escherichia coli (strain K12)).